We begin with the raw amino-acid sequence, 396 residues long: Elongation factor Tu (396 aa).

The tr-type G domain occupies K10–E206. Residues G19–T26 form a G1 region. G19–T26 is a binding site for GTP. Residue T26 coordinates Mg(2+). A G2 region spans residues G60–N64. Residues D81 to G84 form a G3 region. Residues D81 to H85 and N136 to D139 contribute to the GTP site. The interval N136–D139 is G4. A G5 region spans residues S174–T176.

This sequence belongs to the TRAFAC class translation factor GTPase superfamily. Classic translation factor GTPase family. EF-Tu/EF-1A subfamily. Monomer.

It is found in the cytoplasm. It carries out the reaction GTP + H2O = GDP + phosphate + H(+). GTP hydrolase that promotes the GTP-dependent binding of aminoacyl-tRNA to the A-site of ribosomes during protein biosynthesis. The chain is Elongation factor Tu from Psychrobacter arcticus (strain DSM 17307 / VKM B-2377 / 273-4).